A 61-amino-acid chain; its full sequence is Small ribosomal subunit protein uS14 (61 aa).

Zn(2+) contacts are provided by cysteine 24, cysteine 27, cysteine 40, and cysteine 43.

Belongs to the universal ribosomal protein uS14 family. Zinc-binding uS14 subfamily. In terms of assembly, part of the 30S ribosomal subunit. Contacts proteins S3 and S10. It depends on Zn(2+) as a cofactor.

In terms of biological role, binds 16S rRNA, required for the assembly of 30S particles and may also be responsible for determining the conformation of the 16S rRNA at the A site. In Elusimicrobium minutum (strain Pei191), this protein is Small ribosomal subunit protein uS14.